A 321-amino-acid chain; its full sequence is Probable cell division protein WhiA (321 aa).

A DNA-binding region (H-T-H motif) is located at residues 275-308 (SLDELGRLADPPMTKDAVAGRIRRLLAMADKRAA).

This sequence belongs to the WhiA family.

Functionally, involved in cell division and chromosome segregation. The sequence is that of Probable cell division protein WhiA from Micrococcus luteus (strain ATCC 4698 / DSM 20030 / JCM 1464 / CCM 169 / CCUG 5858 / IAM 1056 / NBRC 3333 / NCIMB 9278 / NCTC 2665 / VKM Ac-2230) (Micrococcus lysodeikticus).